The sequence spans 1394 residues: DNA-directed RNA polymerase subunit beta (1394 aa).

Belongs to the RNA polymerase beta chain family. In terms of assembly, the RNAP catalytic core consists of 2 alpha, 1 beta, 1 beta' and 1 omega subunit. When a sigma factor is associated with the core the holoenzyme is formed, which can initiate transcription.

The enzyme catalyses RNA(n) + a ribonucleoside 5'-triphosphate = RNA(n+1) + diphosphate. In terms of biological role, DNA-dependent RNA polymerase catalyzes the transcription of DNA into RNA using the four ribonucleoside triphosphates as substrates. The chain is DNA-directed RNA polymerase subunit beta from Anaplasma phagocytophilum (Ehrlichia phagocytophila).